Here is a 178-residue protein sequence, read N- to C-terminus: Caveolin-1 (178 aa).

An N-acetylserine modification is found at serine 2. At serine 2 the chain carries Phosphoserine. Positions 2–94 (SGGKYVDSEG…WKASFTTFTV (93 aa)) are required for homooligomerization. The Cytoplasmic segment spans residues 2–104 (SGGKYVDSEG…TKYWFYRLLS (103 aa)). The residue at position 5 (lysine 5) is an N6-acetyllysine; alternate. Residue lysine 5 forms a Glycyl lysine isopeptide (Lys-Gly) (interchain with G-Cter in ubiquitin); alternate linkage. Tyrosine 6 is modified (phosphotyrosine). Residue serine 9 is modified to Phosphoserine. Position 14 is a phosphotyrosine; by ABL1 (tyrosine 14). Position 25 is a phosphotyrosine (tyrosine 25). Residues lysine 26, lysine 30, lysine 39, lysine 47, and lysine 57 each participate in a glycyl lysine isopeptide (Lys-Gly) (interchain with G-Cter in ubiquitin) cross-link. Residues 82–94 (DGIWKASFTTFTV) form an interaction with CAVIN3 region. The segment at residues 105–125 (ALFGIPMALIWGIYFAILSFL) is an intramembrane region (helical). The Cytoplasmic portion of the chain corresponds to 126–178 (HIWAVVPCIKSFLIEIQCISRVYSIYVHTFCDPFFEAVGKIFSNIRINMQKEI). An interacts with SPRY1, SPRY2, SPRY3 and SPRY4 region spans residues 131–142 (VPCIKSFLIEIQ). 3 S-palmitoyl cysteine lipidation sites follow: cysteine 133, cysteine 143, and cysteine 156. Residues 149 to 160 (SIYVHTFCDPFF) form an interacts with SPRY1, SPRY2, and SPRY4 region. The interval 167–178 (FSNIRINMQKEI) is interacts with SPRY1, SPRY2, SPRY3 and SPRY4.

It belongs to the caveolin family. As to quaternary structure, homooligomer. Interacts with GLIPR2. Interacts with NOSTRIN. Interacts with SNAP25 and STX1A. Interacts (via the N-terminus) with DPP4; the interaction is direct. Interacts with CTNNB1, CDH1 and JUP. Interacts with PACSIN2; this interaction induces membrane tubulation. Interacts with SLC7A9. Interacts with BMX and BTK. Interacts with TGFBR1. Interacts with CAVIN3 (via leucine-zipper domain) in a cholesterol-sensitive manner. Interacts with CAVIN1. Interacts with EHD2 in a cholesterol-dependent manner. Forms a ternary complex with UBXN6 and VCP; mediates CAV1 targeting to lysosomes for degradation. Interacts with ABCG1; this interaction regulates ABCG1-mediated cholesterol efflux. Interacts with NEU3; this interaction enhances NEU3 sialidase activity within caveola. Interacts (via C-terminus) with SPRY1, SPRY2 (via C-terminus), SPRY3, and SPRY4. Interacts with IGFBP5; this interaction allows trafficking of IGFBP5 from the plasma membrane to the nucleus. Post-translationally, phosphorylated at Tyr-14 by ABL1 in response to oxidative stress. Ubiquitinated. Undergo monoubiquitination and multi- and/or polyubiquitination. Monoubiquitination of N-terminal lysines promotes integration in a ternary complex with UBXN6 and VCP which promotes oligomeric CAV1 targeting to lysosomes for degradation. Ubiquitinated by ZNRF1; leading to degradation and modulation of the TLR4-mediated immune response.

The protein localises to the golgi apparatus membrane. The protein resides in the cell membrane. Its subcellular location is the membrane. It localises to the caveola. It is found in the membrane raft. In terms of biological role, may act as a scaffolding protein within caveolar membranes. Forms a stable heterooligomeric complex with CAV2 that targets to lipid rafts and drives caveolae formation. Mediates the recruitment of CAVIN proteins (CAVIN1/2/3/4) to the caveolae. Interacts directly with G-protein alpha subunits and can functionally regulate their activity. Involved in the costimulatory signal essential for T-cell receptor (TCR)-mediated T-cell activation. Its binding to DPP4 induces T-cell proliferation and NF-kappa-B activation in a T-cell receptor/CD3-dependent manner. Recruits CTNNB1 to caveolar membranes and may regulate CTNNB1-mediated signaling through the Wnt pathway. Negatively regulates TGFB1-mediated activation of SMAD2/3 by mediating the internalization of TGFBR1 from membrane rafts leading to its subsequent degradation. Binds 20(S)-hydroxycholesterol (20(S)-OHC). In Felis catus (Cat), this protein is Caveolin-1 (CAV1).